Reading from the N-terminus, the 530-residue chain is Bifunctional purine biosynthesis protein PurH (530 aa).

The MGS-like domain maps to 1–148 (MNNARPIRRA…KNHKDVTIVV (148 aa)).

This sequence belongs to the PurH family.

It catalyses the reaction (6R)-10-formyltetrahydrofolate + 5-amino-1-(5-phospho-beta-D-ribosyl)imidazole-4-carboxamide = 5-formamido-1-(5-phospho-D-ribosyl)imidazole-4-carboxamide + (6S)-5,6,7,8-tetrahydrofolate. The catalysed reaction is IMP + H2O = 5-formamido-1-(5-phospho-D-ribosyl)imidazole-4-carboxamide. It participates in purine metabolism; IMP biosynthesis via de novo pathway; 5-formamido-1-(5-phospho-D-ribosyl)imidazole-4-carboxamide from 5-amino-1-(5-phospho-D-ribosyl)imidazole-4-carboxamide (10-formyl THF route): step 1/1. The protein operates within purine metabolism; IMP biosynthesis via de novo pathway; IMP from 5-formamido-1-(5-phospho-D-ribosyl)imidazole-4-carboxamide: step 1/1. This Vibrio atlanticus (strain LGP32) (Vibrio splendidus (strain Mel32)) protein is Bifunctional purine biosynthesis protein PurH.